Consider the following 682-residue polypeptide: Nisin leader peptide-processing serine protease NisP (682 aa).

A signal peptide spans 1–22 (MKKILGFLFIVCSLGLSATVHG). The propeptide occupies 23–195 (ETTNSQQLLS…RKAKEVVSLR (173 aa)). The Peptidase S8 domain maps to 231 to 566 (QWDMKYVTNN…VDLLNGKNKA (336 aa)). Catalysis depends on charge relay system residues D259, H306, and S512. The LPXTG sorting signal motif lies at 652–656 (LPVTG). A Pentaglycyl murein peptidoglycan amidated threonine modification is found at T655. The propeptide at 656–682 (GDGEDFLPALGIVCISILGILKRKTKN) is removed by sortase.

Belongs to the peptidase S8 family.

It is found in the secreted. The protein localises to the cell wall. It participates in antibiotic biosynthesis; nisin biosynthesis. Functionally, cleaves the lantibiotic nisin precursor peptide. The polypeptide is Nisin leader peptide-processing serine protease NisP (nisP) (Lactococcus lactis subsp. lactis (Streptococcus lactis)).